Consider the following 326-residue polypeptide: Ficolin-1 (326 aa).

A signal peptide spans 1–29 (MELSGATMARGLAVLLVLFLHIKNLPAQA). One can recognise a Collagen-like domain in the interval 55 to 93 (GLPGAPGPKGEAGVIGERGERGLPGAPGKAGPVGPKGDR). The segment at 72-111 (RGERGLPGAPGKAGPVGPKGDRGEKGMRGEKGDAGQSQSC) is disordered. Residues 77 to 89 (LPGAPGKAGPVGP) are compositionally biased toward low complexity. Residues 90–104 (KGDRGEKGMRGEKGD) show a composition bias toward basic and acidic residues. A Fibrinogen C-terminal domain is found at 109 to 326 (QSCATGPRNC…KVSEMKVRPA (218 aa)). 2 cysteine pairs are disulfide-bonded: C111-C139 and C118-C146. An a domain; contributes to trimerization region spans residues 115 to 154 (PRNCKDLLDRGYFLSGWHTIYLPDCRPLTVLCDMDTDGGG). Positions 155–243 (WTVFQRRMDG…LVLGAFVGGS (89 aa)) are b domain; contributes to trimerization. The Ca(2+) site is built by D262, D264, S266, and S268. A disulfide bridge links C270 with C283. 282–284 (DCH) contributes to the a carbohydrate binding site. Residue N305 is glycosylated (N-linked (GlcNAc...) asparagine). The p domain stretch occupies residues 317-326 (KVSEMKVRPA).

This sequence belongs to the ficolin lectin family. In terms of assembly, homotrimer. Interacts with elastin/ELN. Interacts (via Fibrinogen C-terminal domain) with FFAR2. Interacts with CRP; may regulate monocyte activation by FCN1. Peripheral blood leukocytes, monocytes and granulocytes. Also detected in spleen, lung, and thymus, may be due to the presence of tissue macrophages or trapped blood in these tissues. Not detected on lymphocytes.

It localises to the secreted. It is found in the cell membrane. In terms of biological role, extracellular lectin functioning as a pattern-recognition receptor in innate immunity. Binds the sugar moieties of pathogen-associated molecular patterns (PAMPs) displayed on microbes and activates the lectin pathway of the complement system. May also activate monocytes through a G protein-coupled receptor, FFAR2, inducing the secretion of interleukin-8/IL-8. Binds preferentially to 9-O-acetylated 2-6-linked sialic acid derivatives and to various glycans containing sialic acid engaged in a 2-3 linkage. The protein is Ficolin-1 (FCN1) of Homo sapiens (Human).